We begin with the raw amino-acid sequence, 1464 residues long: Secretory phospholipase A2 receptor (1464 aa).

An N-terminal signal peptide occupies residues 1–22; it reads MLLSPSLLLPLLLLLGAPRGCA. Residues 23-1398 are Extracellular-facing; that stretch reads EGVAAALTPE…ELPEKGPSHS (1376 aa). Residues 40 to 163 enclose the Ricin B-type lectin domain; the sequence is KGIFVIQSES…GSGGGDICEY (124 aa). 17 disulfide bridges follow: Cys53/Cys66, Cys91/Cys108, Cys180/Cys206, Cys194/Cys221, Cys262/Cys356, Cys332/Cys348, Cys408/Cys503, Cys480/Cys495, Cys619/Cys636, Cys701/Cys798, Cys776/Cys790, Cys842/Cys939, Cys916/Cys931, Cys1069/Cys1089, Cys1211/Cys1225, Cys1282/Cys1378, and Cys1356/Cys1370. A glycan (N-linked (GlcNAc...) asparagine) is linked at Asn95. The region spanning 175 to 223 is the Fibronectin type-II domain; that stretch reads AHGMPCMFPFQYNHQWHHECTREGREDDLLWCATTSRYERDEKWGFCPD. C-type lectin domains follow at residues 240 to 357, 387 to 504, 524 to 645, 675 to 799, 821 to 940, 967 to 1098, 1123 to 1234, and 1259 to 1379; these read NSHI…YVCK, YNRN…YVCK, HGGF…MSLC, GLAS…WICK, YQDA…SICK, FNYK…GFVC, YGNR…GAIC, and FKSN…FICK. Asn456 carries an N-linked (GlcNAc...) asparagine glycan. The chain crosses the membrane as a helical span at residues 1399–1419; the sequence is IIPLAVVLTLIVIVAICTLSF. The Cytoplasmic segment spans residues 1420-1464; the sequence is CIYKHNGGFFRRLAGFRNPYYPATNFSTVHLEENILISDLEKSDQ. The Endocytosis signal motif lies at 1437–1443; that stretch reads NPYYPAT.

In terms of assembly, interacts with sPLA2-IB/PLA2G1B; this interaction mediates intracellular signaling as well as clearance of extracellular sPLA2-IB/PLA2G1B via endocytotic pathway. Interacts with sPLA2-X/PLA2G10; this interaction mediates sPLA2-X/PLA2G10 clearance and inactivation. The secretory phospholipase A2 receptor form may be produced by the action of metalloproteinases. It contains all extracellular domains and only lacks transmembrane and cytosolic regions. It is however unclear whether this form is produced by proteolytic cleavage as suggested by some experiments, or by alternative splicing.

It localises to the cell membrane. It is found in the secreted. Its function is as follows. Receptor for secretory phospholipase A2 (sPLA2). Also able to bind to snake PA2-like toxins. Although its precise function remains unclear, binding of sPLA2 to its receptor participates in both positive and negative regulation of sPLA2 functions as well as clearance of sPLA2. Binding of sPLA2-IB/PLA2G1B induces various effects depending on the cell type, such as activation of the mitogen-activated protein kinase (MAPK) cascade to induce cell proliferation, the production of lipid mediators, selective release of arachidonic acid in bone marrow-derived mast cells. In neutrophils, binding of sPLA2-IB/PLA2G1B can activate p38 MAPK to stimulate elastase release and cell adhesion. May be involved in responses in pro-inflammatory cytokine productions during endotoxic shock. Also has endocytic properties and rapidly internalizes sPLA2 ligands, which is particularly important for the clearance of extracellular sPLA2s to protect their potent enzymatic activities. The soluble secretory phospholipase A2 receptor form is circulating and acts as a negative regulator of sPLA2 functions by blocking the biological functions of sPLA2-IB/PLA2G1B and sPLA2-X/PLA2G10. The chain is Secretory phospholipase A2 receptor (PLA2R1) from Pongo abelii (Sumatran orangutan).